The chain runs to 140 residues: Ribosome maturation factor RimP (140 aa).

The protein belongs to the RimP family.

Its subcellular location is the cytoplasm. Functionally, required for maturation of 30S ribosomal subunits. This is Ribosome maturation factor RimP from Campylobacter hominis (strain ATCC BAA-381 / DSM 21671 / CCUG 45161 / LMG 19568 / NCTC 13146 / CH001A).